The chain runs to 465 residues: E3 ubiquitin-protein ligase ORTHRUS-LIKE 1 (465 aa).

Residues threonine 31–lysine 69 are disordered. The RING-type zinc-finger motif lies at cysteine 109–arginine 148. The region spanning valine 233 to arginine 374 is the YDG domain. Residues methionine 442 to leucine 462 traverse the membrane as a helical segment.

It is found in the nucleus. Its subcellular location is the membrane. The enzyme catalyses S-ubiquitinyl-[E2 ubiquitin-conjugating enzyme]-L-cysteine + [acceptor protein]-L-lysine = [E2 ubiquitin-conjugating enzyme]-L-cysteine + N(6)-ubiquitinyl-[acceptor protein]-L-lysine.. It functions in the pathway protein modification; protein ubiquitination. Its function is as follows. E3 ubiquitin-protein ligase. May participate in methylation-dependent transcriptional regulation. Mediates ubiquitination with the E2 ubiquitin-conjugating enzyme UBC11. The sequence is that of E3 ubiquitin-protein ligase ORTHRUS-LIKE 1 (ORTHL) from Arabidopsis thaliana (Mouse-ear cress).